The chain runs to 350 residues: S-adenosylmethionine:tRNA ribosyltransferase-isomerase (350 aa).

This sequence belongs to the QueA family. Monomer.

It localises to the cytoplasm. The catalysed reaction is 7-aminomethyl-7-carbaguanosine(34) in tRNA + S-adenosyl-L-methionine = epoxyqueuosine(34) in tRNA + adenine + L-methionine + 2 H(+). Its pathway is tRNA modification; tRNA-queuosine biosynthesis. Functionally, transfers and isomerizes the ribose moiety from AdoMet to the 7-aminomethyl group of 7-deazaguanine (preQ1-tRNA) to give epoxyqueuosine (oQ-tRNA). This Bacillus cereus (strain ZK / E33L) protein is S-adenosylmethionine:tRNA ribosyltransferase-isomerase.